The primary structure comprises 691 residues: POU domain, class 6, transcription factor 2 (691 aa).

Residues 25-36 (MNAELRGEDKAA) are compositionally biased toward basic and acidic residues. Disordered stretches follow at residues 25–93 (MNAE…PVGP), 186–297 (LQQQ…LQLV), and 435–461 (SQAS…SALS). Over residues 186 to 195 (LQQQQQQQQQ) the composition is skewed to low complexity. The segment covering 196–210 (QPPPSTNQHPQPAPQ) has biased composition (pro residues). A compositionally biased stretch (low complexity) spans 211–220 (APSQSQQQPL). Residues 221-238 (QPTPPQQPPPASQQPPAP) show a composition bias toward pro residues. 2 stretches are compositionally biased toward low complexity: residues 239-280 (TSQL…SQSP) and 438-461 (SMSQ…SALS). A POU-specific domain is found at 476–586 (VDGVNLEEIR…VLERWMAEAE (111 aa)). Positions 607–666 (KRKRRTSFTPQALEILNAHFEKNTHPSGQEMTEIAEKLNYDREVVRVWFCNKRQALKNTI) form a DNA-binding region, homeobox.

Belongs to the POU transcription factor family. Class-6 subfamily. In terms of tissue distribution, expressed only within the CNS, where its expression is restricted to the medical habenulla, to a dispersed population of neurons in the dorsal hypothalamus, and to subsets of ganglion and amacrine cells in the retina.

It localises to the nucleus. Its function is as follows. Probable transcription factor likely to be involved in early steps in the differentiation of amacrine and ganglion cells. Recognizes and binds to the DNA sequence 5'-ATGCAAAT-3'. Isoform 1 does not bind DNA. The chain is POU domain, class 6, transcription factor 2 (POU6F2) from Homo sapiens (Human).